A 327-amino-acid chain; its full sequence is Zinc transport protein ZntB (327 aa).

Residues 1–273 lie on the Cytoplasmic side of the membrane; that stretch reads MEAIKGSEVN…ARRTYTMSLM (273 aa). A helical transmembrane segment spans residues 274–294; that stretch reads AMVFLPSTFLTGLFGVNLGGI. Residues 295-300 lie on the Periplasmic side of the membrane; it reads PGGAWH. A helical membrane pass occupies residues 301–321; that stretch reads FGFSMFCILLVVLIGGVTLWL. Topologically, residues 322–327 are cytoplasmic; sequence HRSKWL.

It belongs to the CorA metal ion transporter (MIT) (TC 1.A.35) family.

Its subcellular location is the cell inner membrane. It catalyses the reaction Zn(2+)(out) + H(+)(out) = Zn(2+)(in) + H(+)(in). Functionally, zinc transporter. Acts as a Zn(2+):proton symporter, which likely mediates zinc ion uptake. In Citrobacter koseri (strain ATCC BAA-895 / CDC 4225-83 / SGSC4696), this protein is Zinc transport protein ZntB.